A 326-amino-acid chain; its full sequence is Protein BCCIP homolog (326 aa).

The disordered stretch occupies residues 37–81 (SHPEDCQCSDEDISFDEKQKIPNLPRKGKEEQVSDSSDEEDSQED). The residue at position 45 (S45) is a Phosphoserine. A compositionally biased stretch (acidic residues) spans 72–81 (SSDEEDSQED).

Belongs to the BCP1 family.

The protein is Protein BCCIP homolog of Arabidopsis thaliana (Mouse-ear cress).